The chain runs to 178 residues: MILSDKTILKMLAEKTLIIEPLEKEQIQPASVDIRLGNTFSIVEDSCTGIINLEKEVKYKTITSDTYILLPNQFVLATTMEYFELPNNLTAFVEGRSSLGRLGLFIQNAGWVDPGFKGEITLELFNANRCAIELKAGRRVGQLVFAKMDDTALNPYKGKYQGQKGATGSRVFLDYEVK.

DCTP-binding positions include 96–101 (RSSLGR), Asp113, 121–123 (TLE), Gln142, Tyr156, and Gln163. Catalysis depends on Glu123, which acts as the Proton donor/acceptor.

Belongs to the dCTP deaminase family. Homotrimer.

It carries out the reaction dCTP + 2 H2O = dUMP + NH4(+) + diphosphate. The protein operates within pyrimidine metabolism; dUMP biosynthesis; dUMP from dCTP: step 1/1. In terms of biological role, bifunctional enzyme that catalyzes both the deamination of dCTP to dUTP and the hydrolysis of dUTP to dUMP without releasing the toxic dUTP intermediate. The protein is dCTP deaminase, dUMP-forming of Acetivibrio thermocellus (strain ATCC 27405 / DSM 1237 / JCM 9322 / NBRC 103400 / NCIMB 10682 / NRRL B-4536 / VPI 7372) (Clostridium thermocellum).